The chain runs to 315 residues: Lipoyl synthase (315 aa).

[4Fe-4S] cluster contacts are provided by Cys62, Cys67, Cys73, Cys88, Cys92, Cys95, and Ser302. Residues 73–291 (CFGHGTATFM…GELAKKLGFS (219 aa)) enclose the Radical SAM core domain.

Belongs to the radical SAM superfamily. Lipoyl synthase family. It depends on [4Fe-4S] cluster as a cofactor.

It localises to the cytoplasm. The enzyme catalyses [[Fe-S] cluster scaffold protein carrying a second [4Fe-4S](2+) cluster] + N(6)-octanoyl-L-lysyl-[protein] + 2 oxidized [2Fe-2S]-[ferredoxin] + 2 S-adenosyl-L-methionine + 4 H(+) = [[Fe-S] cluster scaffold protein] + N(6)-[(R)-dihydrolipoyl]-L-lysyl-[protein] + 4 Fe(3+) + 2 hydrogen sulfide + 2 5'-deoxyadenosine + 2 L-methionine + 2 reduced [2Fe-2S]-[ferredoxin]. Its pathway is protein modification; protein lipoylation via endogenous pathway; protein N(6)-(lipoyl)lysine from octanoyl-[acyl-carrier-protein]: step 2/2. Functionally, catalyzes the radical-mediated insertion of two sulfur atoms into the C-6 and C-8 positions of the octanoyl moiety bound to the lipoyl domains of lipoate-dependent enzymes, thereby converting the octanoylated domains into lipoylated derivatives. The chain is Lipoyl synthase from Coxiella burnetii (strain Dugway 5J108-111).